The following is a 359-amino-acid chain: Glyceraldehyde-3-phosphate dehydrogenase, glycosomal (359 aa).

NAD(+)-binding positions include R12 to I13, D38, Q91, and S134. D-glyceraldehyde 3-phosphate contacts are provided by residues S165 to T167, T197, T226 to G227, and R249. C166 acts as the Nucleophile in catalysis. Position 335 (N335) interacts with NAD(+). The short motif at A357–L359 is the Microbody targeting signal element.

The protein belongs to the glyceraldehyde-3-phosphate dehydrogenase family. Homotetramer.

It is found in the glycosome. The catalysed reaction is D-glyceraldehyde 3-phosphate + phosphate + NAD(+) = (2R)-3-phospho-glyceroyl phosphate + NADH + H(+). The protein operates within carbohydrate degradation; glycolysis; pyruvate from D-glyceraldehyde 3-phosphate: step 1/5. This chain is Glyceraldehyde-3-phosphate dehydrogenase, glycosomal, found in Trypanosoma cruzi.